A 399-amino-acid polypeptide reads, in one-letter code: All trans-polyprenyl-diphosphate synthase PDSS2 (399 aa).

This sequence belongs to the FPP/GGPP synthase family. As to quaternary structure, heterotetramer composed of 2 PDSS1/DPS1 and 2 PDSS2/DLP1 subunits.

It localises to the mitochondrion. It carries out the reaction 7 isopentenyl diphosphate + (2E,6E)-farnesyl diphosphate = all-trans-decaprenyl diphosphate + 7 diphosphate. It catalyses the reaction 6 isopentenyl diphosphate + (2E,6E)-farnesyl diphosphate = all-trans-nonaprenyl diphosphate + 6 diphosphate. It functions in the pathway cofactor biosynthesis; ubiquinone biosynthesis. Heterotetrameric enzyme that catalyzes the condensation of farnesyl diphosphate (FPP), which acts as a primer, and isopentenyl diphosphate (IPP) to produce prenyl diphosphates of varying chain lengths and participates in the determination of the side chain of ubiquinone. Supplies nona and decaprenyl diphosphate, the precursors for the side chain of the isoprenoid quinones ubiquinone-9 (Q9) and ubiquinone-10 (Q10) respectively. The enzyme adds isopentenyl diphosphate molecules sequentially to farnesyl diphosphate with trans stereochemistry. May play a role during cerebellar development. May regulate mitochondrial respiratory chain function. The sequence is that of All trans-polyprenyl-diphosphate synthase PDSS2 from Homo sapiens (Human).